Consider the following 445-residue polypeptide: Argininosuccinate synthase (445 aa).

ATP contacts are provided by residues 17–25 and Ala43; that span reads AFSGGLDTS. Residue Tyr99 coordinates L-citrulline. Gly129 and Thr131 together coordinate ATP. Positions 131, 135, and 136 each coordinate L-aspartate. Asn135 contacts L-citrulline. Asp136 lines the ATP pocket. L-citrulline contacts are provided by Arg139 and Ser192. Asp194 contributes to the ATP binding site. 3 residues coordinate L-citrulline: Thr201, Glu203, and Glu280.

This sequence belongs to the argininosuccinate synthase family. Type 2 subfamily. Homotetramer.

It localises to the cytoplasm. The catalysed reaction is L-citrulline + L-aspartate + ATP = 2-(N(omega)-L-arginino)succinate + AMP + diphosphate + H(+). It functions in the pathway amino-acid biosynthesis; L-arginine biosynthesis; L-arginine from L-ornithine and carbamoyl phosphate: step 2/3. This chain is Argininosuccinate synthase (argG), found in Bradyrhizobium diazoefficiens (strain JCM 10833 / BCRC 13528 / IAM 13628 / NBRC 14792 / USDA 110).